The primary structure comprises 347 residues: NADH-ubiquinone oxidoreductase chain 2 (347 aa).

A run of 11 helical transmembrane segments spans residues 5 to 22, 26 to 45, 60 to 80, 96 to 116, 122 to 142, 153 to 173, 178 to 198, 200 to 220, 237 to 257, 274 to 294, and 325 to 345; these read ILIT…IVLF, WFMI…PILM, FLTQ…NLLC, TMIT…FWVP, ISLS…LSIL, LLLM…LNQT, ILAY…VYNP, LAIL…MLFM, FPLM…LPPL, DMII…YFYT, and LLAP…MLAA.

Belongs to the complex I subunit 2 family. Core subunit of respiratory chain NADH dehydrogenase (Complex I) which is composed of 45 different subunits. Interacts with TMEM242.

The protein localises to the mitochondrion inner membrane. The enzyme catalyses a ubiquinone + NADH + 5 H(+)(in) = a ubiquinol + NAD(+) + 4 H(+)(out). Core subunit of the mitochondrial membrane respiratory chain NADH dehydrogenase (Complex I) which catalyzes electron transfer from NADH through the respiratory chain, using ubiquinone as an electron acceptor. Essential for the catalytic activity and assembly of complex I. This chain is NADH-ubiquinone oxidoreductase chain 2, found in Ailuropoda melanoleuca (Giant panda).